The chain runs to 1299 residues: MPIVMARDLEETASSSEDEEVISQEDHPCIMWTGGCRRIPVLVFHADAILTKDNNIRVIGERYHLSYKIVRTDSRLVRSILTAHGFHEVHPSSTDYNLMWTGSHLKPFLLRTLSEAQKVNHFPRSYELTRKDRLYKNIIRMQHTHGFKAFHILPQTFLLPAEYAEFCNSYSKDRGPWIVKPVASSRGRGVYLINNPNQISLEENILVSRYINNPLLIDDFKFDVRLYVLVTSYDPLVIYLYEEGLARFATVRYDQGAKNIRNQFMHLTNYSVNKKSGDYVSCDDPEVEDYGNKWSMSAMLRYLKQEGRDTTALMAHVEDLIIKTIISAELAIATACKTFVPHRSSCFELYGFDVLIDSTLKPWLLEVNLSPSLACDAPLDLKIKASMISDMFTVVGFVCQDPAQRASTRPIYPTFESSRRNPFQKPQRCRPLSASDAEMKNLVGSAREKGPGKLGGSVLGLSMEEIKVLRRVKEENDRRGGFIRIFPTSETWEIYGSYLEHKTSMNYMLATRLFQDRGNPRRSLLTGRTRMTADGAPELKIESLNSKAKLHAALYERKLLSLEVRKRRRRSSRLRAMRPKYPVITQPAEMNVKTETESEEEEEVALDNEEEEQEASQEESAGFLRENQAKYTPSLTALVENTPKEHSMKVREWNNKGGHCCKLETQELEPKFNLVQILQDNGNLSKVQARIAFSAYLQHVQIRLMKDSGGQTFSASWAAKEDEQMELVVRFLKRASNNLQHSLRMVLPSRRLALLERRRILAHQLGDFIIVYNKETEQMAEKKSKKKVEEEEEDGVNMENFQEFIRQASEAELEEVLTFYTQKNKSASVFLGTHSKSSKNNNSYSDSGAKGDHPETIMEEVKIKPPKQQQTTEIHSDKLSRFTTSAEKEAKLVYSNSSSTPFSGPTATLQKIPNTHLSSVTTSDLSPGPGHHSSLSQIPSAIPSMPHQPTVLLNTVSASASPCLHTGTQNIPNPAGLPRCRSGSHTIGPFSSFQSAAHIYSQKLSRPSSAKAAGSCYLNKHHSGIAKTQKEGEDASSYSKRYNQSMVTAELQRLAEKQAARQYSPSSHINLLTQQVTNLNLATGIINRSSASTPPTLRPIISPSGPTWSTQSDPQAPENHSSPPGSRSLQTGVFAWEGEVENNVYSKATGVVPQHKYHPTAGSYQLHFALQQLEQQKLQSRQLLDQSRARHQAIFGSQTLPNSNLWTMNNGAGCRISSATASGQKPTTLPQKVVPPPSSCASLVPKPPPNHKQVLRRATSQRASKGSSAEGQLNGLQSSLNPAAFVPITSSTDPAHTKI.

The 346-residue stretch at 62-407 folds into the TTL domain; it reads RYHLSYKIVR…VCQDPAQRAS (346 aa). Residues lysine 180, 186–187, 208–211, and 221–223 contribute to the ATP site; these read RG, SRYI, and KFD. Position 186 (arginine 186) interacts with a protein. Position 247 (arginine 247) interacts with L-glutamate. Residue 268-269 coordinates ATP; that stretch reads TN. L-glutamate is bound by residues tyrosine 270, serine 271, and lysine 293. Mg(2+)-binding residues include aspartate 353, glutamate 366, and asparagine 368. The tract at residues 378-488 is c-MTBD region; it reads PLDLKIKASM…RGGFIRIFPT (111 aa). Lysine 384 contributes to the L-glutamate binding site. Disordered stretches follow at residues 589-626, 832-853, 918-941, 1088-1130, and 1217-1275; these read EMNVKTETESEEEEEVALDNEEEEQEASQEESAGFLRE, GTHSKSSKNNNSYSDSGAKGDH, SSVTTSDLSPGPGHHSSLSQIPSA, RSSA…RSLQ, and SSAT…QLNG. Acidic residues predominate over residues 597–617; that stretch reads ESEEEEEVALDNEEEEQEASQ. Residues 838 to 847 are compositionally biased toward low complexity; sequence SKNNNSYSDS. Polar residues-rich tracts occupy residues 1104–1130, 1217–1230, and 1258–1275; these read SGPTWSTQSDPQAPENHSSPPGSRSLQ, SSATASGQKPTTLP, and ATSQRASKGSSAEGQLNG.

This sequence belongs to the tubulin--tyrosine ligase family. As to quaternary structure, interacts with the transcriptional coactivators NCOA1/SRC-1 and NCOA2/TIF2. The cofactor is Mg(2+).

It localises to the cell projection. The protein resides in the cilium. Its subcellular location is the cytoplasm. The protein localises to the cytoskeleton. It is found in the cilium basal body. It localises to the nucleus. The catalysed reaction is L-glutamyl-[protein] + L-glutamate + ATP = gamma-L-glutamyl-L-glutamyl-[protein] + ADP + phosphate + H(+). The enzyme catalyses (L-glutamyl)(n)-gamma-L-glutamyl-L-glutamyl-[protein] + L-glutamate + ATP = (L-glutamyl)(n+1)-gamma-L-glutamyl-L-glutamyl-[protein] + ADP + phosphate + H(+). Its function is as follows. Polyglutamylase which modifies tubulin, generating polyglutamate side chains on the gamma-carboxyl group of specific glutamate residues within the C-terminal tail of tubulin. Preferentially mediates ATP-dependent initiation step of the polyglutamylation reaction over the elongation step. Preferentially modifies the alpha-tubulin tail over a beta-tail. Required for CCSAP localization to both polyglutamylated spindle and cilia microtubules. Increases the effects of transcriptional coactivator NCOA2/TIF2 in glucocorticoid receptor-mediated repression and induction and in androgen receptor-mediated induction. The chain is Tubulin polyglutamylase TTLL5 (TTLL5) from Pongo abelii (Sumatran orangutan).